The chain runs to 362 residues: sn-glycerol-3-phosphate import ATP-binding protein UgpC (362 aa).

One can recognise an ABC transporter domain in the interval 4–235; sequence LKLQAVTKSY…PATLFVASFI (232 aa). Residue 37–44 coordinates ATP; sequence GPSGCGKS.

It belongs to the ABC transporter superfamily. sn-glycerol-3-phosphate importer (TC 3.A.1.1.3) family. As to quaternary structure, the complex is composed of two ATP-binding proteins (UgpC), two transmembrane proteins (UgpA and UgpE) and a solute-binding protein (UgpB).

It is found in the cell inner membrane. It carries out the reaction sn-glycerol 3-phosphate(out) + ATP + H2O = sn-glycerol 3-phosphate(in) + ADP + phosphate + H(+). Part of the ABC transporter complex UgpBAEC involved in sn-glycerol-3-phosphate (G3P) import. Responsible for energy coupling to the transport system. The polypeptide is sn-glycerol-3-phosphate import ATP-binding protein UgpC (Yersinia enterocolitica serotype O:8 / biotype 1B (strain NCTC 13174 / 8081)).